Consider the following 261-residue polypeptide: Putative cytochrome YdhU (261 aa).

The chain crosses the membrane as a helical span at residues phenylalanine 25–glycine 45. Histidine 77 contributes to the heme b binding site. 3 helical membrane-spanning segments follow: residues alanine 81–alanine 101, valine 108–isoleucine 128, and valine 182–cysteine 202. Residue histidine 111 participates in heme b binding. Heme b is bound by residues histidine 223 and histidine 237. Residues phenylalanine 224 to glycine 244 form a helical membrane-spanning segment. Histidine 237 provides a ligand contact to a menaquinone.

The protein belongs to the PhsC family. It depends on heme as a cofactor.

The protein localises to the cell inner membrane. The protein is Putative cytochrome YdhU (ydhU) of Escherichia coli (strain K12).